The primary structure comprises 582 residues: ATP-dependent lipid A-core flippase (582 aa).

5 helical membrane-spanning segments follow: residues 27-47, 69-89, 142-162, 165-185, and 249-269; these read LIVA…MISL, LIIF…TYCL, ALVS…LMFY, WQLS…IGVV, and AAAN…VLYL. The ABC transmembrane type-1 domain occupies 28–310; it reads IVAVIALVIN…LTNVTSQFQR (283 aa). The 237-residue stretch at 342–578 folds into the ABC transporter domain; sequence VSVKDVSFTY…NGAYAQLHRI (237 aa). 376-383 is a binding site for ATP; it reads GRSGSGKS.

Belongs to the ABC transporter superfamily. Lipid exporter (TC 3.A.1.106) family. Homodimer.

The protein resides in the cell inner membrane. The enzyme catalyses ATP + H2O + lipid A-core oligosaccharideSide 1 = ADP + phosphate + lipid A-core oligosaccharideSide 2.. Its function is as follows. Involved in lipopolysaccharide (LPS) biosynthesis. Translocates lipid A-core from the inner to the outer leaflet of the inner membrane. Transmembrane domains (TMD) form a pore in the inner membrane and the ATP-binding domain (NBD) is responsible for energy generation. The sequence is that of ATP-dependent lipid A-core flippase from Vibrio parahaemolyticus serotype O3:K6 (strain RIMD 2210633).